Here is a 469-residue protein sequence, read N- to C-terminus: COP9 signalosome complex subunit 5 (469 aa).

Residues 63 to 200 (TYISSLALCK…IGAFRTFPDN (138 aa)) form the MPN domain. Residues histidine 146, histidine 148, and aspartate 159 each coordinate Zn(2+). A JAMM motif motif is present at residues 146–159 (HSHPGYGCWLSGID). Disordered regions lie at residues 201 to 220 (YKSPDSAAPTNNTRGVPPSK) and 331 to 404 (YDSF…KRPM). The span at 344-353 (DEMDDESDLD) shows a compositional bias: acidic residues.

This sequence belongs to the peptidase M67A family. CSN5 subfamily. As to quaternary structure, component of the COP9 signalosome (CSN) complex.

It localises to the cytoplasm. The protein resides in the nucleus. Functionally, catalytic Component of the COP9 signalosome (CSN) complex that acts as an regulator of the ubiquitin (Ubl) conjugation pathway by mediating the deneddylation of the cullin subunit of SCF-type E3 ubiquitin-protein ligase complexes. The CSN complex is involved in the regulation of the mating pheromone response. The sequence is that of COP9 signalosome complex subunit 5 (RRI1) from Debaryomyces hansenii (strain ATCC 36239 / CBS 767 / BCRC 21394 / JCM 1990 / NBRC 0083 / IGC 2968) (Yeast).